The sequence spans 724 residues: Pesticidal crystal protein Cry11Ba (724 aa).

Belongs to the delta endotoxin family.

Promotes colloidosmotic lysis by binding to the midgut epithelial cells of mosquitos. Active on Aedes aegypti, Culex pipiens and Anopheles stephensi larvae. The sequence is that of Pesticidal crystal protein Cry11Ba (cry11Ba) from Bacillus thuringiensis subsp. jegathesan.